The sequence spans 1804 residues: Obscurin-like protein 1 (1804 aa).

Residue Ser10 is modified to Phosphoserine. Ig-like domains follow at residues 12-100 (PCFL…AAVT), 128-225 (PKFL…ALLQ), 241-330 (PKPV…QTLS), and 339-425 (PRLR…ANVT). The interval 17–19 (FPR) is interaction with TTN. The cysteines at positions 33 and 84 are disulfide-linked. The tract at residues 85–94 (RARNAAGEAY) is interaction with TTN. An intrachain disulfide couples Cys149 to Cys209. The segment at 227-249 (HQPRESPPQDPDENPKPVLEPLK) is disordered. 2 disulfide bridges follow: Cys267–Cys319 and Cys362–Cys412. Residues 517 to 615 (PPGPPVMVEM…FNGSAHLVPT (99 aa)) enclose the Fibronectin type-III domain. Ig-like domains lie at 720 to 800 (PQDK…FGVT), 804 to 891 (PPVH…FTVT), 902 to 982 (PSSE…FTIT), 986 to 1075 (PPVR…VTVT), 1078 to 1165 (PERI…FNVS), 1176 to 1261 (PEAA…FNVQ), 1266 to 1442 (PPVK…ARLS), 1536 to 1621 (PVTI…ARLT), 1625 to 1694 (REVS…EDTG), and 1702 to 1798 (PAQS…ADTQ). Disulfide bonds link Cys738-Cys788, Cys829-Cys879, Cys920-Cys970, Cys1011-Cys1061, Cys1103-Cys1153, Cys1195-Cys1245, Cys1289-Cys1430, and Cys1558-Cys1608.

Component of the 3M complex, composed of core components CUL7, CCDC8 and OBSL1. Interacts with CCDC8. Interacts with CUL7; the interaction is direct. Interacts with FBXW8. Interacts (via N-terminal Ig-like domain) with TTN/titin (via C-terminal Ig-like domain); the interaction is direct.

The protein resides in the cytoplasm. Its subcellular location is the perinuclear region. It localises to the golgi apparatus. In terms of biological role, core component of the 3M complex, a complex required to regulate microtubule dynamics and genome integrity. It is unclear how the 3M complex regulates microtubules, it could act by controlling the level of a microtubule stabilizer. Acts as a regulator of the Cul7-RING(FBXW8) ubiquitin-protein ligase, playing a critical role in the ubiquitin ligase pathway that regulates Golgi morphogenesis and dendrite patterning in brain. Required to localize CUL7 to the Golgi apparatus in neurons. This is Obscurin-like protein 1 (Obsl1) from Mus musculus (Mouse).